Here is a 410-residue protein sequence, read N- to C-terminus: Elongation factor Tu, apicoplast (410 aa).

Residues 10-214 enclose the tr-type G domain; sequence KQHINLGTIG…QIIDNIIIPT (205 aa). The tract at residues 19–26 is G1; that stretch reads GHVDHGKT. 19–26 contributes to the GTP binding site; sequence GHVDHGKT. Threonine 26 serves as a coordination point for Mg(2+). The segment at 60–64 is G2; that stretch reads GITIN. The segment at 81 to 84 is G3; it reads DCPG. Residues 81 to 85 and 136 to 139 each bind GTP; these read DCPGH and NKED. The segment at 136 to 139 is G4; it reads NKED. The tract at residues 174-176 is G5; that stretch reads SAL.

Belongs to the TRAFAC class translation factor GTPase superfamily. Classic translation factor GTPase family. EF-Tu/EF-1A subfamily.

It localises to the plastid. Its subcellular location is the apicoplast. It carries out the reaction GTP + H2O = GDP + phosphate + H(+). In terms of biological role, GTP hydrolase that promotes the GTP-dependent binding of aminoacyl-tRNA to the A-site of ribosomes during protein biosynthesis. The sequence is that of Elongation factor Tu, apicoplast (tufA) from Plasmodium falciparum (isolate 3D7).